Here is an 851-residue protein sequence, read N- to C-terminus: Glycogen phosphorylase, liver form (851 aa).

Ala-2 is modified (N-acetylalanine). Residue Ser-15 is modified to Phosphoserine; by PHK; in form phosphorylase a. Residues 43–45 (DRN), Tyr-76, and Arg-310 each bind AMP. An N6-succinyllysine modification is found at Lys-364. Lys-470 is subject to N6-acetyllysine. 3 positions are modified to phosphoserine: Ser-524, Ser-561, and Ser-639. Position 681 is an N6-(pyridoxal phosphate)lysine (Lys-681). The residue at position 796 (Lys-796) is an N6-acetyllysine.

This sequence belongs to the glycogen phosphorylase family. As to quaternary structure, homodimer; enzymatically active. Interacts with PPP1R3B; recruits the phosphatase PP1 which dephosphorylates and inactivates PYGL/glycogen phosphorylase. Pyridoxal 5'-phosphate serves as cofactor. Post-translationally, acetylation, which is up-regulated by glucose and insulin and down-regulated by glucagon, inhibits the glycogen phosphorylase activity by promoting PPP1R3B-mediated recruitment of phosphatase PP1 and Ser-15 dephosphorylation. Phosphorylation at Ser-15 converts inactive phosphorylase b into active phosphorylase a. Dephosphorylation of Ser-15 by phosphatase PP1 inactivates the enzyme.

Its subcellular location is the cytoplasm. The protein localises to the cytosol. The catalysed reaction is [(1-&gt;4)-alpha-D-glucosyl](n) + phosphate = [(1-&gt;4)-alpha-D-glucosyl](n-1) + alpha-D-glucose 1-phosphate. With respect to regulation, allosterically regulated through the non-covalent binding of metabolites, being activated by AMP and inhibited by ATP, ADP, and glucose-6-phosphate. The activity is also controlled by post-translational modifications including phosphorylation and acetylation. In terms of biological role, allosteric enzyme that catalyzes the rate-limiting step in glycogen catabolism, the phosphorolytic cleavage of glycogen to produce glucose-1-phosphate, and plays a central role in maintaining cellular and organismal glucose homeostasis. This chain is Glycogen phosphorylase, liver form, found in Ovis aries (Sheep).